The primary structure comprises 526 residues: MGKKSLAEQIADIANKPQVEDFDIENDEGVFQHGGSDSDVSSGDESEEELKKQHYVAVGKSKLRNVVDQGLAVKDKKYVGSKGSRAELFNDEEMDAPEQGESESEAESGSEESDAVSFRSDSEDVSESEATSESEIEKDREEDEETAMKKEKLAKIVQTQTKQVINNLAHSAQRDASKGYAILQQNKFFDKILDSRIKLQKALSASNQLPLSQQSWDELLDENNSKLLTSTFKVLEKVLTQCVTVRHKFQIGDHINQSENPSDFDNSKKRSFKELVHETVTLDSDLKSYRSAVLNKWSAKVSASSGKSLLQASKFKAINQSADVQVDNQLADMPRLLKRTKLNRSNTKPLLFDEDLQKGLLKELQLEENVEGDIEEENNLDIPKNYDPRRKDNNALDFTQNPYIYDDEDFYRVLLNDLVEKKISNSQQSNGVTLAITSRSENKLKKNIDTKASKGRKLNYSIQEPIANYEASVNTGYKWSDEQIDEFFAGLLGQKINFNEDDELEADTMHNEEDEEIKNDDIQIFG.

2 disordered regions span residues 16–53 and 82–149; these read KPQV…LKKQ and KGSR…TAMK. 2 stretches are compositionally biased toward acidic residues: residues 89–114 and 123–145; these read FNDE…EESD and EDVS…EDEE.

The protein belongs to the AATF family.

Its subcellular location is the nucleus. It localises to the nucleolus. The sequence is that of Protein BFR2 (BFR2) from Kluyveromyces lactis (strain ATCC 8585 / CBS 2359 / DSM 70799 / NBRC 1267 / NRRL Y-1140 / WM37) (Yeast).